Reading from the N-terminus, the 219-residue chain is Large ribosomal subunit protein uL16 (219 aa).

Belongs to the universal ribosomal protein uL16 family. Component of the large ribosomal subunit. Mature ribosomes consist of a small (40S) and a large (60S) subunit. The 40S subunit contains about 33 different proteins and 1 molecule of RNA (18S). The 60S subunit contains about 49 different proteins and 3 molecules of RNA (28S, 5.8S and 5S).

This is Large ribosomal subunit protein uL16 (RpL10) from Bombyx mandarina (Wild silk moth).